The sequence spans 543 residues: MSSSPSIAQEFLATITPYVEYCQENYTKWYYFIPLVILSLNLISMLHTKYLERKFKAKPLAVYVQDYTFCLITPLVLIYYKSKGTVMQFACDLWDKNLIVSDPKAKTIGLKILGIPLIETKDPENVKAILATQFNDFSLGTRHDFLYSLLGDGIFTLDGAGWKHSRTMLRPQFAREQVSHVKLLEPHMQVLFKHIRKHHGQTFDIQELFFRLTVDSATEFLLGESAESLRDESVGLTPTTKDFDGRNEFADAFNYSQTNQAYRFLLQQMYWILNGSEFRKSIAIVHKFADHYVQKALELTDEDLEKKEGYVFLFELAKQTRDPKVLRDQLLNILVAGRDTTAGLLSFLFFELSRNPEIFAKLREEIENKFGLGQDARVEEISFETLKSCEYLKAVINETLRIYPSVPHNFRVATRNTTLPRGGGEGGLSPIAIKKGQVVMYTILATHRDKDIYGEDAYVFRPERWFEPETRKLGWAYVPFNGGPRICLGQQFALTEASYVTVRLLQEFGNLKQDPNTEYPPKLQNTLTLSLFEGAEVQMYLIL.

At Met1–Lys28 the chain is on the lumenal side. Residues Trp29–Thr48 form a helical membrane-spanning segment. Over Lys49–Leu543 the chain is Cytoplasmic. A heme-binding site is contributed by Cys487.

It belongs to the cytochrome P450 family. Heme serves as cofactor.

Its subcellular location is the endoplasmic reticulum membrane. Together with an NADPH cytochrome P450 the enzyme system catalyzes the terminal hydroxylation as the first step in the assimilation of alkanes and fatty acids. This chain is Cytochrome P450 52A1 (CYP52A1), found in Candida tropicalis (Yeast).